The primary structure comprises 399 residues: Carbamoyl phosphate synthase small chain (399 aa).

The CPSase stretch occupies residues 1-209 (MEKFKLLKLG…SAINKKLHTS (209 aa)). 3 residues coordinate L-glutamine: Ser55, Gly261, and Gly263. The Glutamine amidotransferase type-1 domain occupies 213–399 (RIIVLDLGVK…VYIIYKSKSS (187 aa)). Cys289 serves as the catalytic Nucleophile. 5 residues coordinate L-glutamine: Leu290, Gln293, Asn329, Gly331, and Phe332. Catalysis depends on residues His372 and Glu374.

Belongs to the CarA family. In terms of assembly, composed of two chains; the small (or glutamine) chain promotes the hydrolysis of glutamine to ammonia, which is used by the large (or ammonia) chain to synthesize carbamoyl phosphate. Tetramer of heterodimers (alpha,beta)4.

It is found in the plastid. The protein localises to the chloroplast. It carries out the reaction hydrogencarbonate + L-glutamine + 2 ATP + H2O = carbamoyl phosphate + L-glutamate + 2 ADP + phosphate + 2 H(+). The enzyme catalyses L-glutamine + H2O = L-glutamate + NH4(+). Its pathway is amino-acid biosynthesis; L-arginine biosynthesis; carbamoyl phosphate from bicarbonate: step 1/1. It functions in the pathway pyrimidine metabolism; UMP biosynthesis via de novo pathway; (S)-dihydroorotate from bicarbonate: step 1/3. In terms of biological role, small subunit of the glutamine-dependent carbamoyl phosphate synthetase (CPSase). CPSase catalyzes the formation of carbamoyl phosphate from the ammonia moiety of glutamine, carbonate, and phosphate donated by ATP, constituting the first step of 2 biosynthetic pathways, one leading to arginine and/or urea and the other to pyrimidine nucleotides. The small subunit (glutamine amidotransferase) binds and cleaves glutamine to supply the large subunit with the substrate ammonia. This is Carbamoyl phosphate synthase small chain from Cyanidium caldarium (Red alga).